We begin with the raw amino-acid sequence, 138 residues long: Trypsin inhibitor DE5 alpha chain (138 aa).

The cysteines at positions 40 and 86 are disulfide-linked.

It belongs to the protease inhibitor I3 (leguminous Kunitz-type inhibitor) family. In terms of assembly, heterodimer of an alpha and a beta chain linked by a disulfide bond.

Inhibition of trypsin. This chain is Trypsin inhibitor DE5 alpha chain, found in Adenanthera pavonina (Sandal bead tree).